Here is a 312-residue protein sequence, read N- to C-terminus: Translation initiation factor IF3-2, chloroplastic (312 aa).

A chloroplast-targeting transit peptide spans 1 to 55 (MAGITSSTVGFNAVFTGITKTVSSHSLFSVDSKLCSLRLSKTELSFTNLTPSPRR). Residues 253 to 263 (EMIRKPQEPPT) are compositionally biased toward basic and acidic residues. The interval 253 to 312 (EMIRKPQEPPTRKKKKTAENEASASAAEITAEPEPEPEPEPEPEPEPEPEPEPEPLQIDS) is disordered. A compositionally biased stretch (low complexity) spans 272-282 (NEASASAAEIT). Positions 283–305 (AEPEPEPEPEPEPEPEPEPEPEP) are enriched in acidic residues.

The protein belongs to the IF-3 family. As to quaternary structure, monomer. In terms of tissue distribution, highly expressed in young, newly emerged leaves.

The protein resides in the plastid. It is found in the chloroplast. In terms of biological role, chloroplast translation initiation factor that is essential for the coordination of leaf and chloroplast development. IF-3 binds to the 30S ribosomal subunit and shifts the equilibrium between 70S ribosomes and their 50S and 30S subunits in favor of the free subunits, thus enhancing the availability of 30S subunits on which protein synthesis initiation begins. The chain is Translation initiation factor IF3-2, chloroplastic from Arabidopsis thaliana (Mouse-ear cress).